The sequence spans 105 residues: UPF0235 protein RP839 (105 aa).

The protein belongs to the UPF0235 family.

The chain is UPF0235 protein RP839 from Rickettsia prowazekii (strain Madrid E).